A 656-amino-acid polypeptide reads, in one-letter code: RNA-binding protein EWS (656 aa).

Residues 1 to 285 form an EAD (Gln/Pro/Thr-rich) region; it reads MASTDYSTYS…GVYGQESGGF (285 aa). A run of 31 repeats spans residues 8 to 16, 17 to 27, 28 to 34, 35 to 42, 43 to 50, 51 to 59, 60 to 68, 69 to 75, 76 to 84, 85 to 91, 92 to 110, 111 to 116, 117 to 125, 126 to 156, 157 to 163, 164 to 170, 171 to 177, 178 to 188, 189 to 193, 194 to 201, 202 to 206, 207 to 212, 213 to 218, 219 to 224, 225 to 230, 231 to 238, 239 to 245, 246 to 252, 253 to 259, 260 to 276, and 277 to 285. Positions 8–285 are 31 X approximate tandem repeats; it reads TYSQAAAQQG…GVYGQESGGF (278 aa). A compositionally biased stretch (low complexity) spans 123–137; the sequence is AYPAYGQQPAATAPT. The tract at residues 123–360 is disordered; it reads AYPAYGQQPA…PVDPDEDSDN (238 aa). Residues 143 to 172 are compositionally biased toward polar residues; the sequence is NKPTETSQPQSSTGGYNQPSLGYGQSNYSY. The segment covering 192-266 has biased composition (low complexity); it reads PTSYSSTQPT…QSSSYGQQSS (75 aa). The 30-residue stretch at 256–285 folds into the IQ domain; sequence QQSSSYGQQSSFRQDHPSSMGVYGQESGGF. The residue at position 266 (Ser266) is a Phosphoserine; by PKC. Residues Arg300, Arg302, Arg304, Arg309, Arg314, Arg317, and Arg321 each carry the asymmetric dimethylarginine modification. Residues 308–335 are compositionally biased toward gly residues; that stretch reads DRGGMSRGGRGGGRGGMGSAGERGGFNK. Low complexity predominate over residues 336–350; that stretch reads PGGPMDEGPDLDLGP. The 87-residue stretch at 361-447 folds into the RRM domain; sequence SAIYVQGLND…SKLKVSLARK (87 aa). Lys439 carries the N6-acetyllysine modification. 2 disordered regions span residues 448-525 and 547-656; these read KPPM…WQCP and KPEG…DRPY. An asymmetric dimethylarginine mark is found at Arg455 and Arg464. The residue at position 471 (Arg471) is an Asymmetric dimethylarginine; alternate. Position 471 is an omega-N-methylarginine; alternate (Arg471). Residues 472–490 are compositionally biased toward gly residues; that stretch reads GGPGGPGGPGGPMGRMGGR. Omega-N-methylarginine is present on Arg486. At Arg490 the chain carries Asymmetric dimethylarginine; by PRMT8. An asymmetric dimethylarginine mark is found at Arg494, Arg500, and Arg503. Arg506 carries the post-translational modification Asymmetric dimethylarginine; alternate. Position 506 is an omega-N-methylarginine; alternate (Arg506). Residues 518–549 form a RanBP2-type zinc finger; it reads RAGDWQCPNPGCGNQNFAWRTECNQCKAPKPE. The segment covering 551 to 560 has biased composition (pro residues); it reads FLPPPFPPPG. Asymmetric dimethylarginine is present on residues Arg563 and Arg565. The span at 566–591 shows a compositional bias: gly residues; sequence GGPGGMRGGRGGLMDRGGPGGMFRGG. An Asymmetric dimethylarginine; alternate; by PRMT8 modification is found at Arg572. Arg572 carries the omega-N-methylarginine; alternate; by PRMT8 modification. Asymmetric dimethylarginine occurs at positions 575, 581, 589, and 592. The span at 592 to 606 shows a compositional bias: basic and acidic residues; it reads RGGDRGGFRGGRGMD. At Arg596 the chain carries Asymmetric dimethylarginine; alternate; by PRMT8. At Arg596 the chain carries Omega-N-methylarginine; alternate; by PRMT8. Arg600 carries the post-translational modification Asymmetric dimethylarginine. At Arg603 the chain carries Asymmetric dimethylarginine; by PRMT8. Residue Arg607 is modified to Asymmetric dimethylarginine; alternate; by PRMT8. Arg607 bears the Omega-N-methylarginine; alternate; by PRMT8 mark. Residues 607-618 show a composition bias toward gly residues; the sequence is RGGFGGGRRGGP. Position 615 is an asymmetric dimethylarginine; alternate (Arg615). Arg615 is modified (omega-N-methylarginine; alternate). An asymmetric dimethylarginine mark is found at Arg633 and Arg636. A Nuclear localization signal motif is present at residues 639–656; the sequence is PGKMDKGEHRQERRDRPY. The segment covering 641 to 656 has biased composition (basic and acidic residues); that stretch reads KMDKGEHRQERRDRPY.

It belongs to the RRM TET family. In terms of assembly, binds POLR2C, SF1, calmodulin and RNA. Interacts with PTK2B/FAK2 and TDRD3. Binds calmodulin in the presence, but not in the absence, of calcium ion. Forms a complex with REC8, PRDM9, SYCP3 and SYCP1; complex formation is dependent of phosphorylated form of REC8 and requires PRDM9 bound to hotspot DNA; EWSR1 joins PRDM9 with the chromosomal axis through REC8. Post-translationally, phosphorylated; calmodulin-binding inhibits phosphorylation of Ser-266. Highly methylated on arginine residues. Methylation is mediated by PRMT1 and, at lower level by PRMT8. As to expression, ubiquitous.

The protein resides in the nucleus. The protein localises to the cytoplasm. Its subcellular location is the cell membrane. Functionally, binds to ssRNA containing the consensus sequence 5'-AGGUAA-3'. Might normally function as a transcriptional repressor. EWS-fusion-proteins (EFPS) may play a role in the tumorigenic process. They may disturb gene expression by mimicking, or interfering with the normal function of CTD-POLII within the transcription initiation complex. They may also contribute to an aberrant activation of the fusion protein target genes. The sequence is that of RNA-binding protein EWS (EWSR1) from Homo sapiens (Human).